The following is a 1140-amino-acid chain: Squamosa promoter-binding-like protein 15 (1140 aa).

2 disordered regions span residues 73–112 (RVNAGLSHHQQQQQQSPPAAAKAAEALRQGGGGSGGLNLQ) and 124–177 (DVSP…GGNS). 2 stretches are compositionally biased toward low complexity: residues 76 to 100 (AGLSHHQQQQQQSPPAAAKAAEALR) and 125 to 135 (VSPAATTVSSS). Positions 164–177 (ASGGGGGGGGGGNS) are enriched in gly residues. The SBP-type zinc-finger motif lies at 184–261 (YPMCQVDDCR…AGHNRRRRKT (78 aa)). Positions 187, 192, 209, 212, 228, 231, 235, and 247 each coordinate Zn(2+). The short motif at 244 to 260 (KRSCRRRLAGHNRRRRK) is the Bipartite nuclear localization signal element. Disordered regions lie at residues 327–382 (NNGN…ADGF), 403–472 (TSNP…TPPY), 496–517 (LSSESSNPLDERSPSSSPPVTH), and 558–597 (KDSERPIENGSPPNPAYQSCYTSTSCSDHSPSTSNSDGQD). Residues 345 to 375 (ASHSQQQDSVQRTTNGFEKQTNGLDKQTNGF) are compositionally biased toward polar residues. Positions 403–430 (TSNPDSNTSQSQGSSDSSGNNKSKSQST) are enriched in low complexity. Over residues 450–466 (RKNDALERSPEMYKQPD) the composition is skewed to basic and acidic residues. A compositionally biased stretch (polar residues) spans 496-514 (LSSESSNPLDERSPSSSPP). Residues 579–593 (TSTSCSDHSPSTSNS) are compositionally biased toward low complexity.

As to expression, expressed in stems, leaf sheaths, and young panicles.

It localises to the nucleus. In terms of biological role, trans-acting factor that binds specifically to the consensus nucleotide sequence 5'-TNCGTACAA-3'. This chain is Squamosa promoter-binding-like protein 15 (SPL15), found in Oryza sativa subsp. indica (Rice).